Reading from the N-terminus, the 992-residue chain is ATP-dependent 6-phosphofructokinase subunit alpha (992 aa).

Residues 1 to 558 form an N-terminal catalytic PFK domain 1 region; that stretch reads MNNSVYGVAF…LYSNFMSTTV (558 aa). Residues glycine 193, 256-257, and 286-289 contribute to the ATP site; these read RS and GDGS. Residue aspartate 287 coordinates Mg(2+). Beta-D-fructose 6-phosphate-binding positions include 332–334, arginine 369, 376–378, glutamate 433, lysine 460, and 466–469; these read SID, MGR, and HVQR. Aspartate 334 functions as the Proton acceptor in the catalytic mechanism. The segment at 559-572 is interdomain linker; it reads NDDGSQLLPEADRL. The interval 573–992 is C-terminal regulatory PFK domain 2; the sequence is NIAIVHVGAP…AAKEDSALYV (420 aa). Residues arginine 643, 700-704, arginine 738, 745-747, glutamate 805, arginine 831, 837-840, and arginine 929 each bind beta-D-fructose 2,6-bisphosphate; these read TVSNN, QGG, and HVQQ.

It belongs to the phosphofructokinase type A (PFKA) family. ATP-dependent PFK group I subfamily. Eukaryotic two domain clade 'E' sub-subfamily. In terms of assembly, heterooctamer of 4 alpha and 4 beta chains. The cofactor is Mg(2+).

It is found in the cytoplasm. The enzyme catalyses beta-D-fructose 6-phosphate + ATP = beta-D-fructose 1,6-bisphosphate + ADP + H(+). It functions in the pathway carbohydrate degradation; glycolysis; D-glyceraldehyde 3-phosphate and glycerone phosphate from D-glucose: step 3/4. Its activity is regulated as follows. Allosterically activated by ADP, AMP, or fructose 2,6-bisphosphate, and allosterically inhibited by ATP or citrate. In terms of biological role, catalyzes the phosphorylation of D-fructose 6-phosphate to fructose 1,6-bisphosphate by ATP, the first committing step of glycolysis. The sequence is that of ATP-dependent 6-phosphofructokinase subunit alpha (PFK1) from Kluyveromyces lactis (strain ATCC 8585 / CBS 2359 / DSM 70799 / NBRC 1267 / NRRL Y-1140 / WM37) (Yeast).